The following is a 363-amino-acid chain: Peptide chain release factor 2 (363 aa).

Gln-251 bears the N5-methylglutamine mark.

Belongs to the prokaryotic/mitochondrial release factor family. In terms of processing, methylated by PrmC. Methylation increases the termination efficiency of RF2.

Its subcellular location is the cytoplasm. In terms of biological role, peptide chain release factor 2 directs the termination of translation in response to the peptide chain termination codons UGA and UAA. This chain is Peptide chain release factor 2 (prfB), found in Helicobacter pylori (strain ATCC 700392 / 26695) (Campylobacter pylori).